A 383-amino-acid chain; its full sequence is Processive diacylglycerol beta-glucosyltransferase (383 aa).

The protein belongs to the glycosyltransferase 28 family. UgtP subfamily.

It is found in the cell membrane. The enzyme catalyses a 1,2-diacyl-3-O-(beta-D-glucopyranosyl)-sn-glycerol + UDP-alpha-D-glucose = a 1,2-diacyl-3-O-(beta-D-Glc-(1-&gt;6)-beta-D-Glc)-sn-glycerol + UDP + H(+). It catalyses the reaction a 1,2-diacyl-3-O-(beta-D-Glc-(1-&gt;6)-beta-D-Glc)-sn-glycerol + UDP-alpha-D-glucose = a 1,2-diacyl-3-O-(beta-D-Glc-(1-&gt;6)-beta-D-Glc-(1-&gt;6)-beta-D-Glc)-sn-glycerol + UDP + H(+). The catalysed reaction is a 1,2-diacyl-sn-glycerol + UDP-alpha-D-glucose = a 1,2-diacyl-3-O-(beta-D-glucopyranosyl)-sn-glycerol + UDP + H(+). Its pathway is glycolipid metabolism; diglucosyl-diacylglycerol biosynthesis. Functionally, processive glucosyltransferase involved in the biosynthesis of both the bilayer- and non-bilayer-forming membrane glucolipids. Is able to successively transfer up to three glucosyl residues to diacylglycerol (DAG), thereby catalyzing the formation of beta-monoglucosyl-DAG (3-O-(beta-D-glucopyranosyl)-1,2-diacyl-sn-glycerol), beta-diglucosyl-DAG (3-O-(beta-D-glucopyranosyl-beta-(1-&gt;6)-D-glucopyranosyl)-1,2-diacyl-sn-glycerol) and beta-triglucosyl-DAG (3-O-(beta-D-glucopyranosyl-beta-(1-&gt;6)-D-glucopyranosyl-beta-(1-&gt;6)-D-glucopyranosyl)-1,2-diacyl-sn-glycerol). Beta-diglucosyl-DAG is the predominant glycolipid found in Bacillales and is also used as a membrane anchor for lipoteichoic acid (LTA). This Bacillus licheniformis (strain ATCC 14580 / DSM 13 / JCM 2505 / CCUG 7422 / NBRC 12200 / NCIMB 9375 / NCTC 10341 / NRRL NRS-1264 / Gibson 46) protein is Processive diacylglycerol beta-glucosyltransferase.